A 209-amino-acid chain; its full sequence is Ribosomal RNA small subunit methyltransferase G (209 aa).

S-adenosyl-L-methionine contacts are provided by residues Gly-75, Leu-80, 126 to 127, and Arg-141; that span reads VE.

The protein belongs to the methyltransferase superfamily. RNA methyltransferase RsmG family.

It localises to the cytoplasm. It carries out the reaction guanosine(527) in 16S rRNA + S-adenosyl-L-methionine = N(7)-methylguanosine(527) in 16S rRNA + S-adenosyl-L-homocysteine. Its function is as follows. Specifically methylates the N7 position of guanine in position 527 of 16S rRNA. This chain is Ribosomal RNA small subunit methyltransferase G, found in Colwellia psychrerythraea (strain 34H / ATCC BAA-681) (Vibrio psychroerythus).